We begin with the raw amino-acid sequence, 336 residues long: Iron-uptake system permease protein FeuC (336 aa).

9 helical membrane-spanning segments follow: residues Leu-7 to Val-27, Val-57 to Ile-77, Pro-85 to Phe-105, Met-120 to Trp-140, Ile-150 to Leu-170, Ala-191 to Ile-211, Val-246 to Ala-266, Tyr-280 to Gly-300, and Glu-308 to Phe-328.

The protein belongs to the binding-protein-dependent transport system permease family. FecCD subfamily. The complex is composed of one ATP-binding protein (YusV), two transmembrane proteins (FeuB and FeuC) and a solute-binding protein (FeuA).

It is found in the cell membrane. Its function is as follows. Involved in the uptake of iron. Probably responsible for the translocation of the substrate across the membrane. Part of the ABC transporter complex FeuABC/YusV involved in import of the catecholate siderophores bacillibactin and enterobactin. The sequence is that of Iron-uptake system permease protein FeuC (feuC) from Bacillus subtilis (strain 168).